The chain runs to 242 residues: MGRGRVELKRIENKINRQVTFAKRRNGLLKKAYELSVLCDAEVALIIFSNRGKLYEFCSSSSMLKTLERYQKCNYGAPETNVSTREALELSSQQEYLKLKARYEALQRSQRNLLGEDLGPLSTKELESLERQLDVSLKQIRSTRTQYMLDQLTDLQRKEHMLNEANKTLKQRLLEGTQVNQLQWNPNAQDVGYGRQQAQPQGDGFFHPLECEPTLQIGYQPDPITVAAAGPSVNNYMPGWLP.

One can recognise an MADS-box domain in the interval 1–61; that stretch reads MGRGRVELKR…GKLYEFCSSS (61 aa). Residues 89–185 enclose the K-box domain; sequence ELSSQQEYLK…GTQVNQLQWN (97 aa).

In terms of tissue distribution, expressed in flowers and seeds.

The protein resides in the nucleus. Functionally, probable transcription factor involved in flower development. In Vitis vinifera (Grape), this protein is Agamous-like MADS-box protein MADS4.